Here is a 1729-residue protein sequence, read N- to C-terminus: Zinc finger CCCH domain-containing protein 13 (1729 aa).

2 disordered regions span residues 1–40 and 57–156; these read MSKIRRKVTVENTKTISESTSRRPSVFERLGPSTGSTTET and CRFI…NGDI. Over residues 10 to 23 the composition is skewed to polar residues; sequence VENTKTISESTSRR. The C3H1-type zinc-finger motif lies at 36–64; sequence STTETQCRNWLKTGSCLYGNTCRFIHGPS. Phosphoserine is present on residues S64 and S77. Positions 76–136 are enriched in basic and acidic residues; the sequence is RSPERPTGDL…IKIVKERTPE (61 aa). Positions 162–196 form a coiled coil; that stretch reads HELSLEMKRQKIQRELMKLEQENMDKREEIIIQKE. K179 participates in a covalent cross-link: Glycyl lysine isopeptide (Lys-Gly) (interchain with G-Cter in SUMO2). Basic and acidic residues predominate over residues 182–193; sequence QENMDKREEIII. Disordered regions lie at residues 182 to 528 and 581 to 1527; these read QENM…IRDV and DVYQ…PISD. A phosphoserine mark is found at S198, S207, S209, and S211. Positions 204–213 are enriched in low complexity; sequence SKLSPSPSLR. Basic residues predominate over residues 214–224; it reads KSSKSPKRKSS. The residue at position 242 (S242) is a Phosphoserine. Polar residues predominate over residues 245 to 254; the sequence is LDQQRNSKGN. T263 is modified (phosphothreonine). Residue S265 is modified to Phosphoserine. Positions 283 to 315 are enriched in basic and acidic residues; that stretch reads KYKVKDRIEEKPRDGKDRGRDFEKQREKRDKPR. Phosphoserine is present on residues S316, S318, S324, and S327. The segment covering 321 to 345 has biased composition (low complexity); that stretch reads QHHSPLSSRHHSSSSQSGSSIQRHS. A phosphothreonine mark is found at T353 and T363. Residues 358-368 show a composition bias toward polar residues; it reads YQRTLTPSLRR. A phosphoserine mark is found at S369, S371, and S380. 2 stretches are compositionally biased toward basic and acidic residues: residues 393–528 and 581–636; these read PMRE…IRDV and DVYQ…EKGS. The span at 639–654 shows a compositional bias: polar residues; that stretch reads TRGSQMDSHSSGSNYH. Basic and acidic residues predominate over residues 655–701; sequence DSWETRSSYPERDRYPERDTRDPARDSSFERRHGERDRRDNRERDQR. A Phosphoserine modification is found at S704. Residues 706-865 adopt a coiled-coil conformation; that stretch reads IRHQGRSEEL…KERERQREWE (160 aa). The segment covering 710 to 897 has biased composition (basic and acidic residues); it reads GRSEELERDE…IPRDSHEERK (188 aa). S907, S909, S913, S921, S924, S929, S949, S951, and S953 each carry phosphoserine. Residues 920–938 show a composition bias toward basic and acidic residues; it reads HSPDSDTYHSGDDKNEKHR. Residues 957–1035 are compositionally biased toward basic and acidic residues; it reads LTEDRQGRWK…GSDRAHDEKK (79 aa). T958 is modified (phosphothreonine). The span at 1036-1046 shows a compositional bias: basic residues; that stretch reads KAKAPKKPVKK. Over residues 1047–1065 the composition is skewed to basic and acidic residues; it reads KKEEDVGVERGNLETHEDS. S1069, S1086, S1090, and S1093 each carry phosphoserine. A compositionally biased stretch (basic residues) spans 1072–1086; the sequence is KGQKKKNIEKKRKRS. T1109 bears the Phosphothreonine mark. 2 stretches are compositionally biased toward basic and acidic residues: residues 1114–1137 and 1149–1159; these read IKEELADISTDKDGVLEDPLKKEN and PDRTEGLEAEH. Composition is skewed to low complexity over residues 1160–1176 and 1184–1218; these read TAATATPGSTPSPLSSL and AAASTAATALASSAVSATTSATSSSSAATSNTNGS. The span at 1228 to 1253 shows a compositional bias: basic and acidic residues; it reads ARGEKVEVSHVTLEDTPHRKLVDQKR. Residues S1256, S1259, S1273, and S1275 each carry the phosphoserine modification. Over residues 1278-1288 the composition is skewed to basic and acidic residues; it reads SAHRSGDDQGS. S1295 is modified (phosphoserine). Basic and acidic residues-rich tracts occupy residues 1296-1351 and 1359-1440; these read GSRD…DRQV and DSRD…ERTF. S1427, S1443, S1447, S1467, S1470, S1499, and S1526 each carry phosphoserine. Basic and acidic residues-rich tracts occupy residues 1447–1482 and 1490–1499; these read SGKRSEVKLESEHERDLEGSSRDSVALDKERMDRDL and DVSKAERTES.

The protein belongs to the ZC3H13 family. As to quaternary structure, component of the WMM complex, a N6-methyltransferase complex composed of a catalytic subcomplex, named MAC, and of an associated subcomplex, named MACOM. The MAC subcomplex is composed of METTL3 and METTL14. The MACOM subcomplex is composed of WTAP, ZC3H13, CBLL1/HAKAI, VIRMA, and, in some cases of RBM15 (RBM15 or RBM15B). Also a component of a MACOM-like complex, named WTAP complex, composed of WTAP, ZC3H13, CBLL1/HAKAI, VIRMA, RBM15, BCLAF1 and THRAP3.

Its subcellular location is the nucleus speckle. The protein localises to the nucleus. The protein resides in the nucleoplasm. In terms of biological role, associated component of the WMM complex, a complex that mediates N6-methyladenosine (m6A) methylation of RNAs, a modification that plays a role in the efficiency of mRNA splicing and RNA processing. Acts as a key regulator of m6A methylation by promoting m6A methylation of mRNAs at the 3'-UTR. Controls embryonic stem cells (ESCs) pluripotency via its role in m6A methylation. In the WMM complex, anchors component of the MACOM subcomplex in the nucleus. Also required for bridging WTAP to the RNA-binding component RBM15 (RBM15 or RBM15B). This chain is Zinc finger CCCH domain-containing protein 13, found in Mus musculus (Mouse).